Reading from the N-terminus, the 593-residue chain is Capsid protein 1 (593 aa).

The protein belongs to the NCLDV major capsid protein family.

The protein localises to the virion. The protein is Capsid protein 1 of Acanthamoeba polyphaga mimivirus (APMV).